The chain runs to 321 residues: Malate dehydrogenase (321 aa).

NAD(+) contacts are provided by residues 10-15 and Asp-34; that span reads GAGQIG. Positions 83 and 89 each coordinate substrate. NAD(+) contacts are provided by residues Asn-96 and 119 to 121; that span reads ITN. The substrate site is built by Asn-121 and Arg-152. The active-site Proton acceptor is the His-176.

The protein belongs to the LDH/MDH superfamily. MDH type 3 family.

It carries out the reaction (S)-malate + NAD(+) = oxaloacetate + NADH + H(+). In terms of biological role, catalyzes the reversible oxidation of malate to oxaloacetate. The protein is Malate dehydrogenase of Xanthobacter autotrophicus (strain ATCC BAA-1158 / Py2).